We begin with the raw amino-acid sequence, 148 residues long: Large ribosomal subunit protein bL9 (148 aa).

Belongs to the bacterial ribosomal protein bL9 family.

In terms of biological role, binds to the 23S rRNA. The chain is Large ribosomal subunit protein bL9 from Pelotomaculum thermopropionicum (strain DSM 13744 / JCM 10971 / SI).